A 390-amino-acid chain; its full sequence is MLQFDLLTTDPASHARRGRLTLRHGQVQTPIFMPVGTHGSVKGVLPRSLHEMGAQIILGNTFHLWLRPGLAVLQGFGGLHGFEKWNKPILTDSGGFQVWSLGALRTITEEGVHFASPVNGDKLFLSPEVSMQIQTTLDSDIVMQLDECTPYETRGQRTTERAACQSMQMSLRWAKRSQDEFQRLNNPNALFGIVQGGMYENLRAESLAALAAMDLPGYAIGGVSVGEPKDEMLRIMAHTPHRLPAHKPRYLMGVGTPEDLVEGVAQGVDMFDCVMPTRNARNGTLFTRFGDLKIRNARHKTDPQPLDGSCTCYTCAGPSGVAWDQGGRDGFSRAYLHHLERCGEMLGPMLSTVHNLHYYLNLMREIRQALDAGEFTQLRARLKADRARGV.

Residue aspartate 92 is the Proton acceptor of the active site. Residues 92–96 (DSGGF), aspartate 146, glutamine 195, and glycine 222 each bind substrate. The segment at 253-259 (GVGTPED) is RNA binding. Residue aspartate 272 is the Nucleophile of the active site. The RNA binding; important for wobble base 34 recognition stretch occupies residues 277–281 (TRNAR). The Zn(2+) site is built by cysteine 310, cysteine 312, cysteine 315, and histidine 354.

It belongs to the queuine tRNA-ribosyltransferase family. Homodimer. Within each dimer, one monomer is responsible for RNA recognition and catalysis, while the other monomer binds to the replacement base PreQ1. Requires Zn(2+) as cofactor.

It carries out the reaction 7-aminomethyl-7-carbaguanine + guanosine(34) in tRNA = 7-aminomethyl-7-carbaguanosine(34) in tRNA + guanine. It functions in the pathway tRNA modification; tRNA-queuosine biosynthesis. Functionally, catalyzes the base-exchange of a guanine (G) residue with the queuine precursor 7-aminomethyl-7-deazaguanine (PreQ1) at position 34 (anticodon wobble position) in tRNAs with GU(N) anticodons (tRNA-Asp, -Asn, -His and -Tyr). Catalysis occurs through a double-displacement mechanism. The nucleophile active site attacks the C1' of nucleotide 34 to detach the guanine base from the RNA, forming a covalent enzyme-RNA intermediate. The proton acceptor active site deprotonates the incoming PreQ1, allowing a nucleophilic attack on the C1' of the ribose to form the product. After dissociation, two additional enzymatic reactions on the tRNA convert PreQ1 to queuine (Q), resulting in the hypermodified nucleoside queuosine (7-(((4,5-cis-dihydroxy-2-cyclopenten-1-yl)amino)methyl)-7-deazaguanosine). This is Queuine tRNA-ribosyltransferase from Verminephrobacter eiseniae (strain EF01-2).